The sequence spans 1943 residues: Sickle tail protein homolog (1943 aa).

Disordered regions lie at residues 1–79 (MEEN…KEIL) and 112–177 (QERL…RSTN). Residues 38–47 (AECRRTKERL) show a composition bias toward basic and acidic residues. The span at 48–62 (SNGNSRGSVSKSSRN) shows a compositional bias: polar residues. A Phosphoserine modification is found at serine 169. Tyrosine 244 carries the post-translational modification Phosphotyrosine. Residues 290–331 (ARGDGPGAPRPGSTAHPPHAIPNSPPSTPVPHSMPPSPSRIP) form a disordered region. Pro residues predominate over residues 308–328 (HAIPNSPPSTPVPHSMPPSPS). Serine 357 is a glycosylation site (O-linked (GlcNAc) serine). Residues serine 361 and serine 365 each carry the phosphoserine modification. Tyrosine 393 bears the Phosphotyrosine mark. Residues 456 to 476 (RKYPDSHLPTLGSKTPPASPH) form a disordered region. Threonine 470 carries the phosphothreonine modification. Phosphoserine is present on residues serine 474 and serine 526. Coiled coils occupy residues 557–581 (RETRERMQAMEKQIASLTGLVQSAL) and 644–685 (MSLL…ELEI). Position 809 is a phosphoserine (serine 809). A disordered region spans residues 848-874 (VLKSQEEAAHTSGQPFHSTGAPGDAKS). A coiled-coil region spans residues 957–985 (SAKNRAVSIEKAEKKWEEKRQNLDHYNGK). Disordered stretches follow at residues 1003–1230 (PNLE…SDAS), 1305–1329 (KTKEMEKQNTDKCHVSSHTRLTESS), and 1352–1377 (PKEARHANVNPNEDGESSSSSPTEEN). Phosphoserine occurs at positions 1027, 1030, 1033, and 1044. Over residues 1044–1053 (SPPPPPPPPR) the composition is skewed to pro residues. 3 stretches are compositionally biased toward basic and acidic residues: residues 1155-1167 (EPSRADSHVKDTR), 1174-1192 (PKEKKNLEFFHEDVRKSDV), and 1305-1318 (KTKEMEKQNTDKCH). Positions 1368 to 1377 (SSSSSPTEEN) are enriched in polar residues. Serine 1461 is subject to Phosphoserine. A coiled-coil region spans residues 1464–1490 (FEECDEELERMMMEEKIEEEEEEENGD). Disordered regions lie at residues 1481–1572 (EEEE…PKKK), 1606–1660 (EEEE…EIRK), and 1677–1943 (ENTI…KETS). 2 stretches are compositionally biased toward polar residues: residues 1491 to 1501 (SVVQNNNTSQM) and 1512 to 1533 (RTGQQVETKSQPHSLATETRNP). Basic and acidic residues-rich tracts occupy residues 1539–1548 (NRTELNKFSH) and 1612–1625 (GTLKQHKEAKRFEI). The segment covering 1643–1653 (QPSIESTSPIS) has biased composition (polar residues). A coiled-coil region spans residues 1656 to 1686 (DEIRKNTYRTLDSLEQTIKQLENTISEMSPK). 2 stretches are compositionally biased toward polar residues: residues 1691–1706 (TSCSSNRDSVASSSHI) and 1731–1747 (IPSASRKGSSGAPQTSR). Serine 1739 is modified (phosphoserine). Positions 1763–1775 (KPGKQSKLQDPRQ) are enriched in basic and acidic residues. A compositionally biased stretch (low complexity) spans 1806 to 1825 (SPSSGKSSSLPSSSGDSSNL). Polar residues-rich tracts occupy residues 1834–1843 (SIASNPLSPQ) and 1853–1869 (LIPSVSNGSLKFQSLTH). Phosphoserine is present on serine 1841. Over residues 1892–1905 (SFSSSPPSPASSVS) the composition is skewed to low complexity. 3 positions are modified to phosphoserine: serine 1896, serine 1899, and serine 1902. The segment covering 1906–1943 (LNQGAKGTRTIHTPSLTSYKAQNGSSSKATPSTAKETS) has biased composition (polar residues).

In terms of assembly, interacts with CPNE4 (via VWFA domain).

The protein localises to the cytoplasm. The protein resides in the cytoskeleton. It is found in the microtubule organizing center. Its subcellular location is the centrosome. Required for normal development of intervertebral disks. This chain is Sickle tail protein homolog (KIAA1217), found in Homo sapiens (Human).